The primary structure comprises 184 residues: Probable RNA 2'-phosphotransferase (184 aa).

The protein belongs to the KptA/TPT1 family.

Functionally, removes the 2'-phosphate from RNA via an intermediate in which the phosphate is ADP-ribosylated by NAD followed by a presumed transesterification to release the RNA and generate ADP-ribose 1''-2''-cyclic phosphate (APPR&gt;P). May function as an ADP-ribosylase. In Rhizobium johnstonii (strain DSM 114642 / LMG 32736 / 3841) (Rhizobium leguminosarum bv. viciae), this protein is Probable RNA 2'-phosphotransferase.